The following is a 148-amino-acid chain: Transcriptional regulator MraZ (148 aa).

SpoVT-AbrB domains lie at 5–51 (STQL…PQPV) and 80–123 (ACDV…DMAK).

It belongs to the MraZ family. As to quaternary structure, forms oligomers.

The protein localises to the cytoplasm. Its subcellular location is the nucleoid. This is Transcriptional regulator MraZ from Nitrosomonas eutropha (strain DSM 101675 / C91 / Nm57).